Here is a 103-residue protein sequence, read N- to C-terminus: Cell division topological specificity factor (103 aa).

It belongs to the MinE family.

Its function is as follows. Prevents the cell division inhibition by proteins MinC and MinD at internal division sites while permitting inhibition at polar sites. This ensures cell division at the proper site by restricting the formation of a division septum at the midpoint of the long axis of the cell. This Prochlorococcus marinus (strain MIT 9211) protein is Cell division topological specificity factor.